The following is a 229-amino-acid chain: Uracil-DNA glycosylase (229 aa).

Aspartate 64 (proton acceptor) is an active-site residue.

Belongs to the uracil-DNA glycosylase (UDG) superfamily. UNG family.

It localises to the cytoplasm. It carries out the reaction Hydrolyzes single-stranded DNA or mismatched double-stranded DNA and polynucleotides, releasing free uracil.. Its function is as follows. Excises uracil residues from the DNA which can arise as a result of misincorporation of dUMP residues by DNA polymerase or due to deamination of cytosine. The polypeptide is Uracil-DNA glycosylase (Salmonella choleraesuis (strain SC-B67)).